The primary structure comprises 440 residues: Chromosome partition protein MukF (440 aa).

Residues 208–236 (LSETSGTLRELQDTLEAAGDKLQANLLRI) are leucine-zipper.

The protein belongs to the MukF family. In terms of assembly, interacts, and probably forms a ternary complex, with MukE and MukB via its C-terminal region. The complex formation is stimulated by calcium or magnesium. It is required for an interaction between MukE and MukB.

The protein localises to the cytoplasm. It localises to the nucleoid. In terms of biological role, involved in chromosome condensation, segregation and cell cycle progression. May participate in facilitating chromosome segregation by condensation DNA from both sides of a centrally located replisome during cell division. Not required for mini-F plasmid partitioning. Probably acts via its interaction with MukB and MukE. Overexpression results in anucleate cells. It has a calcium binding activity. The protein is Chromosome partition protein MukF of Escherichia coli O157:H7.